A 547-amino-acid polypeptide reads, in one-letter code: MSKFGLKNTPQWQGLEKNYREIKKIHLRELFKDENRFNKFSIRDNDLGITFDYSKNIINSDTFKLLIEFVKAAKVTEYAKKMFSGEKINWTEKRAVLHTALRNRSNMPIYVNGKDVMPEIKAVLKKMENFSNDLRSGKWVGATGKKVTDVVNIGIGGSDLGPKMVCESLKYYADGPNVYFVSNIDGADIYEVLKKLNPGTTLFIVASKTFTTLETITNALTARKWLTDKLGDKAVANHFVALSTNVKKVKEFGIDENNMFEFWSFVGGRYSLWSAIGLPIACYVGFDKFIELLDGAYYIDQHFLNAPYEKNIPVIMAALGVWYNNFWGASSHAVLPYSQYLNKFPAYLQQGDMESNGKTINFEGRRVDYGTGPIIWGESGTNGQHSFYQLIHQGTKFIPCDFIGFVNPPEKIGDHHEKLMANYFAQTEALAFGLTKEEVAKNLKKAGISPADIKILTPHKIFEGNKPTNSILFDELTPRTLGALIALYEHKIFTQGIMWRINSFDQWGVELGKVLANVILPELKGQTDNKHDNSTKNLIKIFNSNKK.

Glu-354 (proton donor) is an active-site residue. Residues His-385 and Lys-513 contribute to the active site.

The protein belongs to the GPI family.

The protein resides in the cytoplasm. It catalyses the reaction alpha-D-glucose 6-phosphate = beta-D-fructose 6-phosphate. It functions in the pathway carbohydrate biosynthesis; gluconeogenesis. The protein operates within carbohydrate degradation; glycolysis; D-glyceraldehyde 3-phosphate and glycerone phosphate from D-glucose: step 2/4. In terms of biological role, catalyzes the reversible isomerization of glucose-6-phosphate to fructose-6-phosphate. The polypeptide is Glucose-6-phosphate isomerase (Endomicrobium trichonymphae).